Reading from the N-terminus, the 285-residue chain is Ribosomal RNA small subunit methyltransferase I (285 aa).

It belongs to the methyltransferase superfamily. RsmI family.

Its subcellular location is the cytoplasm. The catalysed reaction is cytidine(1402) in 16S rRNA + S-adenosyl-L-methionine = 2'-O-methylcytidine(1402) in 16S rRNA + S-adenosyl-L-homocysteine + H(+). In terms of biological role, catalyzes the 2'-O-methylation of the ribose of cytidine 1402 (C1402) in 16S rRNA. The sequence is that of Ribosomal RNA small subunit methyltransferase I from Mycobacterium tuberculosis (strain CDC 1551 / Oshkosh).